A 144-amino-acid polypeptide reads, in one-letter code: Transmembrane protein 170A (144 aa).

Residues 1 to 50 are Lumenal-facing; it reads MEREGSGGSGGSAGLLQQILSLKVVPRVGNGTLCPNSTSLCSFPEMWYGV. Asn30 and Asn36 each carry an N-linked (GlcNAc...) asparagine glycan. Residues 51 to 71 traverse the membrane as a helical segment; that stretch reads FLWALVSSLFFHVPAGLLALF. Residues 72–85 lie on the Cytoplasmic side of the membrane; the sequence is TLRHHKYGRFMSVS. The chain crosses the membrane as a helical span at residues 86–106; sequence ILLMGIVGPITAGILTSAAIA. Over 107 to 116 the chain is Lumenal; that stretch reads GVYRAAGKEM. A helical transmembrane segment spans residues 117–137; the sequence is IPFEALTLGTGQTFCVLVVSF. Residues 138-144 lie on the Cytoplasmic side of the membrane; sequence LRILATL.

The protein belongs to the TMEM170 family. As to quaternary structure, interacts with RTN4.

It localises to the endoplasmic reticulum membrane. It is found in the nucleus envelope. Functionally, acts as a regulator of endoplasmic reticulum (ER) and nuclear envelope (NE) morphogenesis. Affects the ratio between tubular ER and ER sheets by promoting sheet formation at the expense of tubules. Influences NE expansion, nuclear pore complex formation and proper localization of inner nuclear membrane proteins. The sequence is that of Transmembrane protein 170A (TMEM170A) from Homo sapiens (Human).